The chain runs to 525 residues: GMP synthase [glutamine-hydrolyzing] (525 aa).

Residues 9–207 (RILILDFGSQ…VRDICQCEAL (199 aa)) form the Glutamine amidotransferase type-1 domain. Cys86 acts as the Nucleophile in catalysis. Catalysis depends on residues His181 and Glu183. The 193-residue stretch at 208–400 (WTPAKIIDDA…LGLPYDMLYR (193 aa)) folds into the GMPS ATP-PPase domain. Residue 235-241 (SGGVDSS) coordinates ATP.

Homodimer.

The enzyme catalyses XMP + L-glutamine + ATP + H2O = GMP + L-glutamate + AMP + diphosphate + 2 H(+). It participates in purine metabolism; GMP biosynthesis; GMP from XMP (L-Gln route): step 1/1. Functionally, catalyzes the synthesis of GMP from XMP. This chain is GMP synthase [glutamine-hydrolyzing], found in Salmonella newport (strain SL254).